Consider the following 728-residue polypeptide: Elongation factor 2 (728 aa).

The region spanning 19–261 (EQIRNIAIAA…MVAEHFPNPI (243 aa)) is the tr-type G domain. GTP is bound by residues 28 to 35 (AHVDHGKT), 94 to 98 (DTPGH), and 148 to 151 (NKVD). At H596 the chain carries Diphthamide.

It belongs to the TRAFAC class translation factor GTPase superfamily. Classic translation factor GTPase family. EF-G/EF-2 subfamily.

Its subcellular location is the cytoplasm. Functionally, catalyzes the GTP-dependent ribosomal translocation step during translation elongation. During this step, the ribosome changes from the pre-translocational (PRE) to the post-translocational (POST) state as the newly formed A-site-bound peptidyl-tRNA and P-site-bound deacylated tRNA move to the P and E sites, respectively. Catalyzes the coordinated movement of the two tRNA molecules, the mRNA and conformational changes in the ribosome. The sequence is that of Elongation factor 2 from Halobacterium salinarum (strain ATCC 29341 / DSM 671 / R1).